A 296-amino-acid chain; its full sequence is Methylsterol monooxygenase erg25B (296 aa).

A run of 3 helical transmembrane segments spans residues 50–70 (IMSFVMHEIVYFGRSVPWILI), 98–118 (FVLLSHFTVELPQIWLFHPMA), and 125–145 (TSVPFPSVWTMMYQIAIFFVL). One can recognise a Fatty acid hydroxylase domain in the interval 140 to 276 (AIFFVLEDTW…FRWWDYLLDT (137 aa)). Positions 154-158 (HRALH) match the Histidine box-1 motif. The Histidine box-2 motif lies at 167 to 171 (HKIHH). The chain crosses the membrane as a helical span at residues 201–221 (ILWCALTGDLHIFTMYVWIVL). Residues 251–257 (HHDLHHE) carry the Histidine box-3 motif.

It belongs to the sterol desaturase family. Fe cation serves as cofactor.

It localises to the endoplasmic reticulum membrane. Its pathway is steroid metabolism; ergosterol biosynthesis. Functionally, sterol-C4-methyl oxidase; part of the third module of ergosterol biosynthesis pathway that includes the late steps of the pathway. Erg25B is a catalytic component of the C-4 demethylation complex that catalyzes the conversion of 4,4-dimethylfecosterol into fecosterol via 4-methylfecosterol. The third module or late pathway involves the ergosterol synthesis itself through consecutive reactions that mainly occur in the endoplasmic reticulum (ER) membrane. Firstly, the squalene synthase erg9 catalyzes the condensation of 2 farnesyl pyrophosphate moieties to form squalene, which is the precursor of all steroids. Squalene synthase is crucial for balancing the incorporation of farnesyl diphosphate (FPP) into sterol and nonsterol isoprene synthesis. Secondly, squalene is converted into lanosterol by the consecutive action of the squalene epoxidase erg1 and the lanosterol synthase erg7. Then, the delta(24)-sterol C-methyltransferase erg6 methylates lanosterol at C-24 to produce eburicol. Eburicol is the substrate of the sterol 14-alpha demethylase encoded by cyp51A and cyp51B, to yield 4,4,24-trimethyl ergosta-8,14,24(28)-trienol. The C-14 reductase erg24 then reduces the C14=C15 double bond which leads to 4,4-dimethylfecosterol. A sequence of further demethylations at C-4, involving the C-4 demethylation complex containing the C-4 methylsterol oxidases erg25A or erg25B, the sterol-4-alpha-carboxylate 3-dehydrogenase erg26 and the 3-keto-steroid reductase erg27, leads to the production of fecosterol via 4-methylfecosterol. The C-8 sterol isomerase erg2 then catalyzes the reaction which results in unsaturation at C-7 in the B ring of sterols and thus converts fecosterol to episterol. The sterol-C5-desaturase erg3B then catalyzes the introduction of a C-5 double bond in the B ring to produce 5-dehydroepisterol. The 2 other sterol-C5-desaturases, erg3A and erg3C, seem to be less important in ergosterol biosynthesis. The C-22 sterol desaturase erg5 further converts 5-dehydroepisterol into ergosta-5,7,22,24(28)-tetraen-3beta-ol by forming the C-22(23) double bond in the sterol side chain. Finally, ergosta-5,7,22,24(28)-tetraen-3beta-ol is substrate of the C-24(28) sterol reductases erg4A and erg4B to produce ergosterol. Possible alternative sterol biosynthetic pathways might exist from fecosterol to ergosterol, depending on the activities of the erg3 isoforms. The polypeptide is Methylsterol monooxygenase erg25B (Aspergillus fumigatus (strain ATCC MYA-4609 / CBS 101355 / FGSC A1100 / Af293) (Neosartorya fumigata)).